Reading from the N-terminus, the 139-residue chain is MSNRTVMGFDFGTKSIGAAIGQEVTGTARPLASFKAKDGIPDWSQIEKIIKEWQPDLVVVGLPLNMDGTEQLVTTQAKKFANRLHGRFGVQIALHDERLSTVEARAHLFEQGGYRSLDKGSVDATSAVIILESWFERQY.

It belongs to the YqgF nuclease family.

It is found in the cytoplasm. Its function is as follows. Could be a nuclease involved in processing of the 5'-end of pre-16S rRNA. The chain is Putative pre-16S rRNA nuclease from Proteus mirabilis (strain HI4320).